Reading from the N-terminus, the 386-residue chain is 3-ketoacyl-CoA thiolase (386 aa).

The Acyl-thioester intermediate role is filled by Cys-91. Residues His-342 and Cys-372 each act as proton acceptor in the active site.

It belongs to the thiolase-like superfamily. Thiolase family. In terms of assembly, heterotetramer of two alpha chains (FadB) and two beta chains (FadA).

It is found in the cytoplasm. It carries out the reaction an acyl-CoA + acetyl-CoA = a 3-oxoacyl-CoA + CoA. It participates in lipid metabolism; fatty acid beta-oxidation. Functionally, catalyzes the final step of fatty acid oxidation in which acetyl-CoA is released and the CoA ester of a fatty acid two carbons shorter is formed. The protein is 3-ketoacyl-CoA thiolase of Colwellia psychrerythraea (strain 34H / ATCC BAA-681) (Vibrio psychroerythus).